The chain runs to 427 residues: Histidinol dehydrogenase (427 aa).

Positions 123, 185, and 208 each coordinate NAD(+). Substrate is bound by residues Ser231, Gln253, and His256. Zn(2+) is bound by residues Gln253 and His256. Catalysis depends on proton acceptor residues Glu321 and His322. 4 residues coordinate substrate: His322, Asp355, Glu409, and His414. A Zn(2+)-binding site is contributed by Asp355. Zn(2+) is bound at residue His414.

Belongs to the histidinol dehydrogenase family. Requires Zn(2+) as cofactor.

The catalysed reaction is L-histidinol + 2 NAD(+) + H2O = L-histidine + 2 NADH + 3 H(+). It functions in the pathway amino-acid biosynthesis; L-histidine biosynthesis; L-histidine from 5-phospho-alpha-D-ribose 1-diphosphate: step 9/9. Functionally, catalyzes the sequential NAD-dependent oxidations of L-histidinol to L-histidinaldehyde and then to L-histidine. The polypeptide is Histidinol dehydrogenase (Oceanobacillus iheyensis (strain DSM 14371 / CIP 107618 / JCM 11309 / KCTC 3954 / HTE831)).